The primary structure comprises 227 residues: Ribosomal RNA large subunit methyltransferase E (227 aa).

Positions 78, 80, 103, 119, and 143 each coordinate S-adenosyl-L-methionine. Lys183 (proton acceptor) is an active-site residue.

The protein belongs to the class I-like SAM-binding methyltransferase superfamily. RNA methyltransferase RlmE family.

It is found in the cytoplasm. It catalyses the reaction uridine(2552) in 23S rRNA + S-adenosyl-L-methionine = 2'-O-methyluridine(2552) in 23S rRNA + S-adenosyl-L-homocysteine + H(+). Specifically methylates the uridine in position 2552 of 23S rRNA at the 2'-O position of the ribose in the fully assembled 50S ribosomal subunit. The chain is Ribosomal RNA large subunit methyltransferase E from Rickettsia canadensis (strain McKiel).